Here is a 491-residue protein sequence, read N- to C-terminus: Interferon regulatory factor 3 (491 aa).

The IRF tryptophan pentad repeat DNA-binding region spans K12 to S116.

This sequence belongs to the IRF family. As to expression, widely expressed with higher expression in lung, spleen and intestine.

It localises to the cytoplasm. Its subcellular location is the nucleus. Key transcriptional regulator of type I interferon (IFN)-dependent immune responses which plays a critical role in the innate immune response against DNA and RNA viruses. Regulates the transcription of type I IFN genes (IFN-alpha and IFN-beta) and IFN-stimulated genes (ISG) by binding to an interferon-stimulated response element (ISRE) in their promoters. May activate transcription by complex formation with other transcriptional factors, possibly members of the STAT family. Binds specifically to the IFN-stimulated response element (ISRE) but not to the IRF-1 binding site PRD-I. This Gallus gallus (Chicken) protein is Interferon regulatory factor 3 (IRF3).